The following is a 415-amino-acid chain: Interleukin-5 receptor subunit alpha (415 aa).

A signal peptide spans 1 to 17 (MVPVLLILVGALATLQA). At 18–339 (DLLNHKKFLL…KERKSLVEWH (322 aa)) the chain is on the extracellular side. Positions 29–120 (PPVNFTIKAT…VSAELKAPPG (92 aa)) constitute a Fibronectin type-III 1 domain. N-linked (GlcNAc...) asparagine glycans are attached at residues Asn-32 and Asn-128. Cystine bridges form between Cys-131–Cys-152 and Cys-179–Cys-193. 2 N-linked (GlcNAc...) asparagine glycosylation sites follow: Asn-213 and Asn-241. The region spanning 238–331 (PPRNVTVEIE…WSQPIYVGKE (94 aa)) is the Fibronectin type-III 2 domain. Cys-266 and Cys-313 are joined by a disulfide. The WSXWS motif signature appears at 319–323 (WGEWS). A helical membrane pass occupies residues 340 to 361 (LIVLPTAACFVLLIFSLICRVC). Topologically, residues 362–415 (HLWTRLFPPVPAPKSNIKDLPVVTEYEKPSNETKIEVVHCVEEVGFEVMGNSTF) are cytoplasmic. A Box 1 motif motif is present at residues 367-375 (LFPPVPAPK).

In terms of assembly, interacts with IL5. Interacts with CSF2RB. Interacts with JAK2. Interacts with SDCBP. Expressed on eosinophils and basophils. Also on B-cells.

The protein localises to the membrane. Its function is as follows. Cell surface receptor that plays an important role in the survival, differentiation, and chemotaxis of eosinophils. Acts by forming a heterodimeric receptor with CSF2RB subunit and subsequently binding to interleukin-5. In unstimulated conditions, interacts constitutively with JAK2. Heterodimeric receptor activation leads to JAK2 stimulation and subsequent activation of the JAK-STAT pathway. This Mus musculus (Mouse) protein is Interleukin-5 receptor subunit alpha (Il5ra).